Consider the following 463-residue polypeptide: 23S rRNA (uracil(1939)-C(5))-methyltransferase RlmD (463 aa).

Positions 6–76 (KSRKPQQPEY…KRLEEAEMVE (71 aa)) constitute a TRAM domain. [4Fe-4S] cluster contacts are provided by C90, C96, C99, and C178. Positions 288, 317, 322, 341, 368, and 389 each coordinate S-adenosyl-L-methionine. The active-site Nucleophile is the C415.

It belongs to the class I-like SAM-binding methyltransferase superfamily. RNA M5U methyltransferase family. RlmD subfamily.

It carries out the reaction uridine(1939) in 23S rRNA + S-adenosyl-L-methionine = 5-methyluridine(1939) in 23S rRNA + S-adenosyl-L-homocysteine + H(+). Functionally, catalyzes the formation of 5-methyl-uridine at position 1939 (m5U1939) in 23S rRNA. This chain is 23S rRNA (uracil(1939)-C(5))-methyltransferase RlmD, found in Acinetobacter baumannii (strain AYE).